A 157-amino-acid chain; its full sequence is Phosphopantetheine adenylyltransferase (157 aa).

S8 is a substrate binding site. Residues S8–F9 and H16 contribute to the ATP site. Residues K40, L72, and R86 each coordinate substrate. ATP-binding positions include G87–R89, E97, and F121–S127.

It belongs to the bacterial CoaD family. In terms of assembly, homohexamer. The cofactor is Mg(2+).

It is found in the cytoplasm. It carries out the reaction (R)-4'-phosphopantetheine + ATP + H(+) = 3'-dephospho-CoA + diphosphate. It functions in the pathway cofactor biosynthesis; coenzyme A biosynthesis; CoA from (R)-pantothenate: step 4/5. Functionally, reversibly transfers an adenylyl group from ATP to 4'-phosphopantetheine, yielding dephospho-CoA (dPCoA) and pyrophosphate. This chain is Phosphopantetheine adenylyltransferase, found in Cutibacterium acnes (strain DSM 16379 / KPA171202) (Propionibacterium acnes).